The chain runs to 252 residues: Aspartate/glutamate leucyltransferase (252 aa).

Belongs to the R-transferase family. Bpt subfamily.

The protein resides in the cytoplasm. It catalyses the reaction N-terminal L-glutamyl-[protein] + L-leucyl-tRNA(Leu) = N-terminal L-leucyl-L-glutamyl-[protein] + tRNA(Leu) + H(+). The enzyme catalyses N-terminal L-aspartyl-[protein] + L-leucyl-tRNA(Leu) = N-terminal L-leucyl-L-aspartyl-[protein] + tRNA(Leu) + H(+). In terms of biological role, functions in the N-end rule pathway of protein degradation where it conjugates Leu from its aminoacyl-tRNA to the N-termini of proteins containing an N-terminal aspartate or glutamate. This Xanthomonas campestris pv. campestris (strain B100) protein is Aspartate/glutamate leucyltransferase.